The following is a 570-amino-acid chain: PTS system lactose-specific EIICB component (570 aa).

One can recognise a PTS EIIC type-3 domain in the interval 9–410 (IEKGKPFFEK…VVDIIIYYPF (402 aa)). 9 consecutive transmembrane segments (helical) span residues 31–51 (GFIS…IAYV), 65–85 (AILM…VAGT), 104–124 (INFI…ASDP), 133–153 (AFMG…TVIV), 178–198 (FKDL…DLVI), 223–243 (GWIG…VGIH), 283–303 (MFIV…MFMW), 340–360 (VFFI…KLFV), and 382–402 (IIMG…LIVV). Residues 467–570 (QTNVLVLCAG…LDFVQQQFEN (104 aa)) enclose the PTS EIIB type-3 domain. Residue Cys-474 is the Phosphocysteine intermediate; for EIIB activity of the active site. Phosphocysteine; by EIIA is present on Cys-474.

The protein localises to the cell membrane. The enzyme catalyses lactose(out) + N(pros)-phospho-L-histidyl-[protein] = lactose 6-phosphate(in) + L-histidyl-[protein]. In terms of biological role, the phosphoenolpyruvate-dependent sugar phosphotransferase system (sugar PTS), a major carbohydrate active transport system, catalyzes the phosphorylation of incoming sugar substrates concomitantly with their translocation across the cell membrane. The enzyme II LacEF PTS system is involved in lactose transport. This chain is PTS system lactose-specific EIICB component, found in Staphylococcus aureus (strain MSSA476).